The chain runs to 564 residues: Ribulokinase (564 aa).

Belongs to the ribulokinase family.

The catalysed reaction is D-ribulose + ATP = D-ribulose 5-phosphate + ADP + H(+). It catalyses the reaction L-ribulose + ATP = L-ribulose 5-phosphate + ADP + H(+). Its pathway is carbohydrate degradation; L-arabinose degradation via L-ribulose; D-xylulose 5-phosphate from L-arabinose (bacterial route): step 2/3. This chain is Ribulokinase, found in Anoxybacillus flavithermus (strain DSM 21510 / WK1).